The primary structure comprises 361 residues: Histidine biosynthesis bifunctional protein HisB (361 aa).

The segment at 1–172 (MTQPTLFIDR…PKTTACKRPP (172 aa)) is histidinol-phosphatase. Asp-9 serves as the catalytic Nucleophile. Positions 9 and 11 each coordinate Mg(2+). Asp-11 (proton donor) is an active-site residue. Residues Cys-92, His-94, Cys-100, and Cys-102 each coordinate Zn(2+). Asp-129 is a binding site for Mg(2+). The imidazoleglycerol-phosphate dehydratase stretch occupies residues 173 to 361 (RYAEVVRTTK…NELPSSKGVL (189 aa)).

In the N-terminal section; belongs to the histidinol-phosphatase family. The protein in the C-terminal section; belongs to the imidazoleglycerol-phosphate dehydratase family. Mg(2+) is required as a cofactor. Zn(2+) serves as cofactor.

It is found in the cytoplasm. It carries out the reaction D-erythro-1-(imidazol-4-yl)glycerol 3-phosphate = 3-(imidazol-4-yl)-2-oxopropyl phosphate + H2O. The enzyme catalyses L-histidinol phosphate + H2O = L-histidinol + phosphate. It functions in the pathway amino-acid biosynthesis; L-histidine biosynthesis; L-histidine from 5-phospho-alpha-D-ribose 1-diphosphate: step 6/9. The protein operates within amino-acid biosynthesis; L-histidine biosynthesis; L-histidine from 5-phospho-alpha-D-ribose 1-diphosphate: step 8/9. This is Histidine biosynthesis bifunctional protein HisB from Actinobacillus pleuropneumoniae serotype 3 (strain JL03).